A 236-amino-acid chain; its full sequence is tRNA (guanine-N(1)-)-methyltransferase (236 aa).

Residues Gly-114 and 134–139 (IGDYIL) contribute to the S-adenosyl-L-methionine site.

This sequence belongs to the RNA methyltransferase TrmD family. As to quaternary structure, homodimer.

Its subcellular location is the cytoplasm. It catalyses the reaction guanosine(37) in tRNA + S-adenosyl-L-methionine = N(1)-methylguanosine(37) in tRNA + S-adenosyl-L-homocysteine + H(+). In terms of biological role, specifically methylates guanosine-37 in various tRNAs. The protein is tRNA (guanine-N(1)-)-methyltransferase of Wolbachia pipientis wMel.